The following is a 249-amino-acid chain: Small ribosomal subunit protein uS2 (249 aa).

This sequence belongs to the universal ribosomal protein uS2 family.

This chain is Small ribosomal subunit protein uS2, found in Listeria innocua serovar 6a (strain ATCC BAA-680 / CLIP 11262).